An 81-amino-acid polypeptide reads, in one-letter code: ATP synthase subunit c, chloroplastic (81 aa).

2 consecutive transmembrane segments (helical) span residues 7 to 27 (AASV…PGIG) and 57 to 77 (LAFM…LLFA).

The protein belongs to the ATPase C chain family. F-type ATPases have 2 components, F(1) - the catalytic core - and F(0) - the membrane proton channel. F(1) has five subunits: alpha(3), beta(3), gamma(1), delta(1), epsilon(1). F(0) has four main subunits: a(1), b(1), b'(1) and c(10-14). The alpha and beta chains form an alternating ring which encloses part of the gamma chain. F(1) is attached to F(0) by a central stalk formed by the gamma and epsilon chains, while a peripheral stalk is formed by the delta, b and b' chains.

Its subcellular location is the plastid. It localises to the chloroplast thylakoid membrane. Functionally, f(1)F(0) ATP synthase produces ATP from ADP in the presence of a proton or sodium gradient. F-type ATPases consist of two structural domains, F(1) containing the extramembraneous catalytic core and F(0) containing the membrane proton channel, linked together by a central stalk and a peripheral stalk. During catalysis, ATP synthesis in the catalytic domain of F(1) is coupled via a rotary mechanism of the central stalk subunits to proton translocation. Its function is as follows. Key component of the F(0) channel; it plays a direct role in translocation across the membrane. A homomeric c-ring of between 10-14 subunits forms the central stalk rotor element with the F(1) delta and epsilon subunits. This is ATP synthase subunit c, chloroplastic from Cryptomeria japonica (Japanese cedar).